A 65-amino-acid chain; its full sequence is Large ribosomal subunit protein bL33 (65 aa).

The tract at residues 17 to 40 (SRSVPSSEKRSAGVSRYTTEKNRR) is disordered.

This sequence belongs to the bacterial ribosomal protein bL33 family.

In Prochlorococcus marinus (strain NATL1A), this protein is Large ribosomal subunit protein bL33.